A 268-amino-acid chain; its full sequence is Universal stress protein MT3220 (268 aa).

ATP-binding positions include glycine 13, glycine 107 to histidine 113, arginine 117, and serine 120 to valine 121.

It belongs to the universal stress protein A family.

The polypeptide is Universal stress protein MT3220 (Mycobacterium tuberculosis (strain CDC 1551 / Oshkosh)).